The following is a 129-amino-acid chain: Small ribosomal subunit protein uS9 (129 aa).

Belongs to the universal ribosomal protein uS9 family.

This is Small ribosomal subunit protein uS9 from Helicobacter pylori (strain Shi470).